We begin with the raw amino-acid sequence, 420 residues long: Tyrosine--tRNA ligase (420 aa).

Position 33 (tyrosine 33) interacts with L-tyrosine. Positions 38–47 match the 'HIGH' region motif; the sequence is PTGPSLHAGH. Residues tyrosine 167 and glutamine 171 each coordinate L-tyrosine. Positions 227–231 match the 'KMSKS' region motif; sequence KFGKS. Lysine 230 is a binding site for ATP. One can recognise an S4 RNA-binding domain in the interval 352–418; it reads RTIIDLLVAS…GKKNFAGVQI (67 aa).

Belongs to the class-I aminoacyl-tRNA synthetase family. TyrS type 1 subfamily. Homodimer.

The protein resides in the cytoplasm. The enzyme catalyses tRNA(Tyr) + L-tyrosine + ATP = L-tyrosyl-tRNA(Tyr) + AMP + diphosphate + H(+). Catalyzes the attachment of tyrosine to tRNA(Tyr) in a two-step reaction: tyrosine is first activated by ATP to form Tyr-AMP and then transferred to the acceptor end of tRNA(Tyr). The polypeptide is Tyrosine--tRNA ligase (Corynebacterium glutamicum (strain ATCC 13032 / DSM 20300 / JCM 1318 / BCRC 11384 / CCUG 27702 / LMG 3730 / NBRC 12168 / NCIMB 10025 / NRRL B-2784 / 534)).